Reading from the N-terminus, the 52-residue chain is Large ribosomal subunit protein bL33 (52 aa).

Belongs to the bacterial ribosomal protein bL33 family.

The chain is Large ribosomal subunit protein bL33 from Helicobacter acinonychis (strain Sheeba).